The chain runs to 475 residues: Tubulin epsilon chain (475 aa).

148–154 provides a ligand contact to GTP; it reads GGGTGSG.

It belongs to the tubulin family. Found in a complex with TEDC1, TEDC2, TUBE1 and TUBD1.

It localises to the cytoplasm. Its subcellular location is the cytoskeleton. The protein localises to the microtubule organizing center. It is found in the centrosome. This Homo sapiens (Human) protein is Tubulin epsilon chain (TUBE1).